A 137-amino-acid chain; its full sequence is Protein PsiE homolog (137 aa).

4 helical membrane-spanning segments follow: residues 15–35 (LRITLNLALIMVGFTLVAFLI), 55–75 (YYMTQDILTFFLYFEFIALIV), 82–102 (FHFPLRYFIYIGITAIIRFII), and 108–128 (ATSTLILSGAILLLVAALFLA).

This sequence belongs to the PsiE family.

The protein localises to the cell membrane. The chain is Protein PsiE homolog from Listeria innocua serovar 6a (strain ATCC BAA-680 / CLIP 11262).